A 426-amino-acid polypeptide reads, in one-letter code: Crinkler effector protein 4 (426 aa).

The LQLFLAK domain stretch occupies residues 20–57 (VEIDDSAKVSKLKKVIKEENPATITCDAKDLQLFLAKK). Residues 59-107 (DAWLDGAGAAAVELDEHGHPQGCVQMDPTLWVKNPKHFGDNFQPGEGQV) are DWL domain. Residues 108–114 (HVLVVVP) carry the HVLVXXP motif motif. An effector domain region spans residues 115 to 426 (EGVVGSASET…RSIPTLSYFS (312 aa)).

This sequence belongs to the Crinkler effector family.

Its subcellular location is the secreted. The protein localises to the host nucleus. Its function is as follows. Secreted effector that is critical to pathogenesis by suppressing plant immune responsess. Promotes Phytophthora infection by suppressing the H(2)O(2) accumulation and callose deposition. May induce cell death by regulating expression of cell death-related genes. This Phytophthora capsici protein is Crinkler effector protein 4.